We begin with the raw amino-acid sequence, 142 residues long: Putative phosphatidylglycerol/phosphatidylinositol transfer protein 2 (142 aa).

An N-terminal signal peptide occupies residues 1–20 (MKFYLYLSILLILLTSTSFG).

It belongs to the NPC2 family. Monomer.

In terms of biological role, catalyzes the intermembrane transfer of phosphatidylglycerol and phosphatidylinositol. This Dictyostelium discoideum (Social amoeba) protein is Putative phosphatidylglycerol/phosphatidylinositol transfer protein 2.